The chain runs to 172 residues: Small ribosomal subunit protein uS5 (172 aa).

The S5 DRBM domain maps to 17-80; sequence LKEKMIAINR…EEARRNMTKV (64 aa).

Belongs to the universal ribosomal protein uS5 family. In terms of assembly, part of the 30S ribosomal subunit. Contacts proteins S4 and S8.

With S4 and S12 plays an important role in translational accuracy. Its function is as follows. Located at the back of the 30S subunit body where it stabilizes the conformation of the head with respect to the body. The protein is Small ribosomal subunit protein uS5 of Polaromonas naphthalenivorans (strain CJ2).